The sequence spans 619 residues: ATP-dependent RNA helicase dbp9 (619 aa).

Residues 1–30 (MKRKLDANDVPSTEVAEEKETKDADNTDFE) form a disordered region. A compositionally biased stretch (basic and acidic residues) spans 16-25 (AEEKETKDAD). Residues 27–55 (TDFESLNLDPRLRQALIREQFTKPTPVQS) carry the Q motif motif. One can recognise a Helicase ATP-binding domain in the interval 58-236 (IPLALEGKDI…GLFCRSPVIL (179 aa)). 71 to 78 (AKTGSGKT) provides a ligand contact to ATP. The DEAD box motif lies at 184–187 (DEAD). One can recognise a Helicase C-terminal domain in the interval 247 to 484 (GISQFVVRCA…EVKPYHFEMK (238 aa)). 2 disordered regions span residues 339 to 390 (SRTS…GKAK) and 582 to 619 (GDNR…RGRK). The segment covering 345-362 (KSKEATDGDDEAKDKMGS) has biased composition (basic and acidic residues). Positions 587–604 (RKAREKNRGKGKGRKPSG) are enriched in basic residues.

The protein belongs to the DEAD box helicase family. DDX56/DBP9 subfamily.

Its subcellular location is the nucleus. The protein resides in the nucleolus. It carries out the reaction ATP + H2O = ADP + phosphate + H(+). In terms of biological role, ATP-binding RNA helicase involved in the biogenesis of 60S ribosomal subunits and is required for the normal formation of 25S and 5.8S rRNAs. The protein is ATP-dependent RNA helicase dbp9 (dbp9) of Neosartorya fischeri (strain ATCC 1020 / DSM 3700 / CBS 544.65 / FGSC A1164 / JCM 1740 / NRRL 181 / WB 181) (Aspergillus fischerianus).